Consider the following 398-residue polypeptide: Chalcone synthase (398 aa).

Cys-169 is a catalytic residue.

The protein belongs to the thiolase-like superfamily. Chalcone/stilbene synthases family.

It carries out the reaction (E)-4-coumaroyl-CoA + 3 malonyl-CoA + 3 H(+) = 2',4,4',6'-tetrahydroxychalcone + 3 CO2 + 4 CoA. The protein operates within secondary metabolite biosynthesis; flavonoid biosynthesis. Its function is as follows. The primary product of this enzyme is 4,2',4',6'-tetrahydroxychalcone (also termed naringenin-chalcone or chalcone) which can under specific conditions spontaneously isomerize into naringenin. The sequence is that of Chalcone synthase (CHS) from Petroselinum crispum (Parsley).